Reading from the N-terminus, the 879-residue chain is Beta-mannosidase (879 aa).

Residues 1-17 (MLLRLLLLLAPCGAGFA) form the signal peptide. N-linked (GlcNAc...) asparagine glycosylation is found at Asn35 and Asn77. Cys167 and Cys176 are disulfide-bonded. 190–192 (WDW) contacts substrate. 2 N-linked (GlcNAc...) asparagine glycosylation sites follow: Asn297 and Asn302. Residue Asn456 coordinates substrate. Glu457 (proton donor) is an active-site residue. Cystine bridges form between Cys540-Cys629, Cys732-Cys761, and Cys764-Cys769. The active-site Nucleophile is Glu554. Asn607 carries an N-linked (GlcNAc...) asparagine glycan. The N-linked (GlcNAc...) asparagine glycan is linked to Asn803.

The protein belongs to the glycosyl hydrolase 2 family. Monomer. Post-translationally, the N-terminus is blocked. In terms of processing, N-glycosylated. Detected in kidney (at protein level). Highest expression is found in thyroid tissue. The amount of transcript is significantly higher in normal tissues than in tissues affected by the disease.

Its subcellular location is the lysosome. It catalyses the reaction Hydrolysis of terminal, non-reducing beta-D-mannose residues in beta-D-mannosides.. It participates in glycan metabolism; N-glycan degradation. Exoglycosidase that cleaves the single beta-linked mannose residue from the non-reducing end of all N-linked glycoprotein oligosaccharides. This is Beta-mannosidase (MANBA) from Bos taurus (Bovine).